The chain runs to 942 residues: UvrABC system protein A (942 aa).

32-39 (GLSGSGKS) is a binding site for ATP. The segment at 251–278 (CPVCGFTVPELEPRLFSFNAPFGSCPTC) adopts a C4-type zinc-finger fold. 2 consecutive ABC transporter domains span residues 308-589 (WNPI…KKSI) and 609-937 (GNGR…HYLK). 641-648 (GVSGSGKS) is an ATP binding site. The segment at 740-766 (CEACSGDGIIKIEMHFLPDVYVPCEVC) adopts a C4-type zinc-finger fold.

This sequence belongs to the ABC transporter superfamily. UvrA family. As to quaternary structure, forms a heterotetramer with UvrB during the search for lesions.

The protein resides in the cytoplasm. In terms of biological role, the UvrABC repair system catalyzes the recognition and processing of DNA lesions. UvrA is an ATPase and a DNA-binding protein. A damage recognition complex composed of 2 UvrA and 2 UvrB subunits scans DNA for abnormalities. When the presence of a lesion has been verified by UvrB, the UvrA molecules dissociate. This is UvrABC system protein A from Streptococcus pyogenes serotype M3 (strain ATCC BAA-595 / MGAS315).